Consider the following 1055-residue polypeptide: Focal adhesion kinase 1 (1055 aa).

The interval 1–29 is disordered; it reads MAAAYLDPNLNHTPSSSTKTHLGTGTERS. N-acetylalanine is present on Ala2. Phosphotyrosine is present on Tyr5. Residues 10–27 are compositionally biased toward polar residues; sequence LNHTPSSSTKTHLGTGTE. At Thr13 the chain carries Phosphothreonine. Ser29 and Ser54 each carry phosphoserine. One can recognise an FERM domain in the interval 35-355; sequence RVLKVFHYFE…GYCRLVNGAT (321 aa). Lys152 is covalently cross-linked (Glycyl lysine isopeptide (Lys-Gly) (interchain with G-Cter in SUMO)). Phosphotyrosine; by autocatalysis is present on Tyr397. Tyr407 is modified (phosphotyrosine). Residues 422–680 enclose the Protein kinase domain; it reads IELGRCIGEG…ELKAQLSTIL (259 aa). Residues 428–434, Lys454, and 500–502 each bind ATP; these read IGEGQFG and ELC. The Proton acceptor role is filled by Asp546. A phosphotyrosine mark is found at Tyr570 and Tyr576. Position 577 is a phosphotyrosine; by RET and SRC (Tyr577). Ser580 is subject to Phosphoserine. The span at 685–697 shows a compositional bias: basic and acidic residues; the sequence is VQQEERMRMESRR. 2 disordered regions span residues 685–734 and 837–923; these read VQQE…PSPQ and VRLS…LDRS. Positions 707–1055 are interaction with TGFB1I1; it reads GSDEAPPKPS…LKMLGQTRPH (349 aa). Ser722 bears the Phosphoserine mark. Phosphoserine; by CDK5 is present on Ser732. The segment covering 837–849 has biased composition (basic and acidic residues); it reads VRLSRGSIDREDG. A Phosphoserine modification is found at Ser843. At Tyr861 the chain carries Phosphotyrosine. A compositionally biased stretch (pro residues) spans 869–880; that stretch reads PAAPPKKPPRPG. Polar residues predominate over residues 886–896; it reads SNLSSISSPAE. The residue at position 913 (Ser913) is a Phosphoserine. The interval 915-1055 is interaction with ARHGEF28; sequence PPTANLDRSN…LKMLGQTRPH (141 aa). Thr917 carries the phosphothreonine modification. A Phosphotyrosine modification is found at Tyr928.

The protein belongs to the protein kinase superfamily. Tyr protein kinase family. FAK subfamily. Interacts with GIT1. Component of a complex that contains at least FER, CTTN and PTK2/FAK1. Interacts with BMX. Interacts with STEAP4. Interacts with ZFYVE21. Interacts with ESR1. Interacts with PIK3R1 or PIK3R2. Interacts with FGR, FLT4 and RET. Interacts with EPHA2 in resting cells; activation of EPHA2 recruits PTPN11, leading to dephosphorylation of PTK2/FAK1 and dissociation of the complex. Interacts with EPHA1 (kinase activity-dependent). Interacts with P53/TP53. Interacts (via first Pro-rich region) with CAS family members (via SH3 domain), including BCAR1, BCAR3, and CASS4. Interacts with NEDD9 (via SH3 domain). Interacts with TGFB1I1. Interacts with SRC, GRB2 and GRB7. Interacts with ARHGEF28. Interacts with SHB. Part of a complex composed of THSD1, PTK2/FAK1, TLN1 and VCL. Interacts with PXN and TLN1. Interacts with SORBS1. Interacts with STAT1. Interacts with WASL. Interacts with ARHGAP26 and SHC1. Interacts with RB1CC1; this inhibits PTK2/FAK1 activity and activation of downstream signaling pathways. Interacts with ARHGEF7. Interacts with MDM2. Interacts with PIAS1. Interacts with DCC. Interacts with LPXN (via LD motif 3). Interacts with MISP. Interacts with EMP2; regulates PTK2 activation and localization. Interacts with DSCAM. Interacts with AMBRA1. Interacts (when tyrosine-phosphorylated) with tensin TNS1; the interaction is increased by phosphorylation of TNS1. In terms of processing, phosphorylated on tyrosine residues upon activation, e.g. upon integrin signaling. Tyr-397 is the major autophosphorylation site, but other kinases can also phosphorylate this residue. Phosphorylation at Tyr-397 promotes interaction with SRC and SRC family members, leading to phosphorylation at Tyr-576, Tyr-577 and at additional tyrosine residues. FGR promotes phosphorylation at Tyr-397 and Tyr-576. FER promotes phosphorylation at Tyr-577, Tyr-861 and Tyr-928, even when cells are not adherent. Tyr-397, Tyr-576 and Ser-722 are phosphorylated only when cells are adherent. Phosphorylation at Tyr-397 is important for interaction with BMX, PIK3R1 and SHC1. Phosphorylation at Tyr-928 is important for interaction with GRB2. Dephosphorylated by PTPN11; PTPN11 is recruited to PTK2 via EPHA2 (tyrosine phosphorylated). Microtubule-induced dephosphorylation at Tyr-397 is crucial for the induction of focal adhesion disassembly; this dephosphorylation could be catalyzed by PTPN11 and regulated by ZFYVE21. Phosphorylation on tyrosine residues is enhanced by NTN1. Sumoylated; this enhances autophosphorylation.

It is found in the cell junction. The protein localises to the focal adhesion. The protein resides in the cell membrane. It localises to the cytoplasm. Its subcellular location is the perinuclear region. It is found in the cell cortex. The protein localises to the cytoskeleton. The protein resides in the microtubule organizing center. It localises to the centrosome. Its subcellular location is the nucleus. It is found in the cilium basal body. It catalyses the reaction L-tyrosyl-[protein] + ATP = O-phospho-L-tyrosyl-[protein] + ADP + H(+). With respect to regulation, subject to autoinhibition, mediated by interactions between the FERM domain and the kinase domain. Activated by autophosphorylation at Tyr-397. This promotes interaction with SRC and phosphorylation at Tyr-576 and Tyr-577 in the kinase activation loop by SRC. Phosphorylation at Tyr-397, Tyr-576 and Tyr-577 is required for maximal kinase activity. In terms of biological role, non-receptor protein-tyrosine kinase that plays an essential role in regulating cell migration, adhesion, spreading, reorganization of the actin cytoskeleton, formation and disassembly of focal adhesions and cell protrusions, cell cycle progression, cell proliferation and apoptosis. Required for early embryonic development and placenta development. Required for embryonic angiogenesis, normal cardiomyocyte migration and proliferation, and normal heart development. Regulates axon growth and neuronal cell migration, axon branching and synapse formation; required for normal development of the nervous system. Plays a role in osteogenesis and differentiation of osteoblasts. Functions in integrin signal transduction, but also in signaling downstream of numerous growth factor receptors, G-protein coupled receptors (GPCR), EPHA2, netrin receptors and LDL receptors. Forms multisubunit signaling complexes with SRC and SRC family members upon activation; this leads to the phosphorylation of additional tyrosine residues, creating binding sites for scaffold proteins, effectors and substrates. Regulates numerous signaling pathways. Promotes activation of phosphatidylinositol 3-kinase and the AKT1 signaling cascade. Promotes activation of MAPK1/ERK2, MAPK3/ERK1 and the MAP kinase signaling cascade. Promotes localized and transient activation of guanine nucleotide exchange factors (GEFs) and GTPase-activating proteins (GAPs), and thereby modulates the activity of Rho family GTPases. Signaling via CAS family members mediates activation of RAC1. Phosphorylates NEDD9 following integrin stimulation. Recruits the ubiquitin ligase MDM2 to P53/TP53 in the nucleus, and thereby regulates P53/TP53 activity, P53/TP53 ubiquitination and proteasomal degradation. Phosphorylates SRC; this increases SRC kinase activity. Phosphorylates ACTN1, ARHGEF7, GRB7, RET and WASL. Promotes phosphorylation of PXN and STAT1; most likely PXN and STAT1 are phosphorylated by a SRC family kinase that is recruited to autophosphorylated PTK2/FAK1, rather than by PTK2/FAK1 itself. Promotes phosphorylation of BCAR1; GIT2 and SHC1; this requires both SRC and PTK2/FAK1. Promotes phosphorylation of BMX and PIK3R1. Its function is as follows. Does not contain a kinase domain and inhibits PTK2/FAK1 phosphorylation and signaling. Its enhanced expression can attenuate the nuclear accumulation of LPXN and limit its ability to enhance serum response factor (SRF)-dependent gene transcription. The polypeptide is Focal adhesion kinase 1 (Rattus norvegicus (Rat)).